The following is a 103-amino-acid chain: Large ribosomal subunit protein uL24 (103 aa).

The protein belongs to the universal ribosomal protein uL24 family. As to quaternary structure, part of the 50S ribosomal subunit.

In terms of biological role, one of two assembly initiator proteins, it binds directly to the 5'-end of the 23S rRNA, where it nucleates assembly of the 50S subunit. Its function is as follows. One of the proteins that surrounds the polypeptide exit tunnel on the outside of the subunit. In Ruegeria pomeroyi (strain ATCC 700808 / DSM 15171 / DSS-3) (Silicibacter pomeroyi), this protein is Large ribosomal subunit protein uL24.